A 248-amino-acid chain; its full sequence is Triosephosphate isomerase (248 aa).

2 residues coordinate D-glyceraldehyde 3-phosphate: Asn10 and Lys12. The Electrophile role is filled by His95. The active-site Proton acceptor is the Glu165. D-glyceraldehyde 3-phosphate contacts are provided by residues Gly171, Leu230, and 232–233 (GN).

This sequence belongs to the triosephosphate isomerase family. As to quaternary structure, homodimer.

The enzyme catalyses D-glyceraldehyde 3-phosphate = dihydroxyacetone phosphate. It functions in the pathway carbohydrate biosynthesis; gluconeogenesis. The protein operates within carbohydrate degradation; glycolysis; D-glyceraldehyde 3-phosphate from glycerone phosphate: step 1/1. Catalyzes the interconversion of glyceraldehyde 3-phosphate and dihydroxyacetone phosphate in the glycolytic and gluconeogenic pathways. This Plasmodium falciparum (isolate 3D7) protein is Triosephosphate isomerase.